Reading from the N-terminus, the 513-residue chain is Maturase K (513 aa).

Belongs to the intron maturase 2 family. MatK subfamily.

The protein localises to the plastid. Its subcellular location is the chloroplast. Its function is as follows. Usually encoded in the trnK tRNA gene intron. Probably assists in splicing its own and other chloroplast group II introns. The chain is Maturase K from Eleusine indica (Goosegrass).